Reading from the N-terminus, the 227-residue chain is uncharacterized protein (227 aa).

The first 22 residues, 1 to 22, serve as a signal peptide directing secretion; the sequence is MDSVMRKSLFLLLPLVVTNAHA.

This is an uncharacterized protein from Salmonella typhi.